Reading from the N-terminus, the 475-residue chain is Sulfate adenylyltransferase subunit 1 (475 aa).

Positions 25-239 constitute a tr-type G domain; that stretch reads KSLLRFLTCG…EVLETVEIQR (215 aa). The interval 34-41 is G1; sequence GSVDDGKS. 34–41 provides a ligand contact to GTP; the sequence is GSVDDGKS. Residues 92–96 form a G2 region; it reads GITID. Residues 113 to 116 form a G3 region; it reads DTPG. Residues 113–117 and 168–171 contribute to the GTP site; these read DTPGH and NKMD. The segment at 168–171 is G4; sequence NKMD. The tract at residues 206–208 is G5; it reads SAL.

This sequence belongs to the TRAFAC class translation factor GTPase superfamily. Classic translation factor GTPase family. CysN/NodQ subfamily. As to quaternary structure, heterodimer composed of CysD, the smaller subunit, and CysN.

The enzyme catalyses sulfate + ATP + H(+) = adenosine 5'-phosphosulfate + diphosphate. The protein operates within sulfur metabolism; hydrogen sulfide biosynthesis; sulfite from sulfate: step 1/3. With CysD forms the ATP sulfurylase (ATPS) that catalyzes the adenylation of sulfate producing adenosine 5'-phosphosulfate (APS) and diphosphate, the first enzymatic step in sulfur assimilation pathway. APS synthesis involves the formation of a high-energy phosphoric-sulfuric acid anhydride bond driven by GTP hydrolysis by CysN coupled to ATP hydrolysis by CysD. The polypeptide is Sulfate adenylyltransferase subunit 1 (Escherichia coli O9:H4 (strain HS)).